The sequence spans 121 residues: Large ribosomal subunit protein uL18 (121 aa).

A compositionally biased stretch (basic residues) spans 1–19; sequence MASKKVQKIRDKRKARVRA. The segment at 1 to 23 is disordered; the sequence is MASKKVQKIRDKRKARVRAKISG.

It belongs to the universal ribosomal protein uL18 family. In terms of assembly, part of the 50S ribosomal subunit; part of the 5S rRNA/L5/L18/L25 subcomplex. Contacts the 5S and 23S rRNAs.

This is one of the proteins that bind and probably mediate the attachment of the 5S RNA into the large ribosomal subunit, where it forms part of the central protuberance. This Syntrophus aciditrophicus (strain SB) protein is Large ribosomal subunit protein uL18.